A 92-amino-acid polypeptide reads, in one-letter code: Small ribosomal subunit protein uS19 (92 aa).

The protein belongs to the universal ribosomal protein uS19 family.

Functionally, protein S19 forms a complex with S13 that binds strongly to the 16S ribosomal RNA. This is Small ribosomal subunit protein uS19 from Bradyrhizobium sp. (strain BTAi1 / ATCC BAA-1182).